The primary structure comprises 675 residues: UvrABC system protein B (675 aa).

A Helicase ATP-binding domain is found at 35–192 (QGMRDGLMYQ…ARLVAMQYTR (158 aa)). 48 to 55 (GVTGSGKT) provides a ligand contact to ATP. Residues 101-124 (YYDYYQPEAYVPTRDLFIEKDSSI) carry the Beta-hairpin motif. The 167-residue stretch at 439 to 605 (QVDDLLGEIK…GVNKAVRELI (167 aa)) folds into the Helicase C-terminal domain. The region spanning 633-668 (AREIRRLEKLMTDHARNLEFEQAAAARDALNALKQR) is the UVR domain.

This sequence belongs to the UvrB family. Forms a heterotetramer with UvrA during the search for lesions. Interacts with UvrC in an incision complex.

It localises to the cytoplasm. Functionally, the UvrABC repair system catalyzes the recognition and processing of DNA lesions. A damage recognition complex composed of 2 UvrA and 2 UvrB subunits scans DNA for abnormalities. Upon binding of the UvrA(2)B(2) complex to a putative damaged site, the DNA wraps around one UvrB monomer. DNA wrap is dependent on ATP binding by UvrB and probably causes local melting of the DNA helix, facilitating insertion of UvrB beta-hairpin between the DNA strands. Then UvrB probes one DNA strand for the presence of a lesion. If a lesion is found the UvrA subunits dissociate and the UvrB-DNA preincision complex is formed. This complex is subsequently bound by UvrC and the second UvrB is released. If no lesion is found, the DNA wraps around the other UvrB subunit that will check the other stand for damage. This Bordetella petrii (strain ATCC BAA-461 / DSM 12804 / CCUG 43448) protein is UvrABC system protein B.